A 96-amino-acid chain; its full sequence is MNLRPLHDRVIVKRLDNETKTASGIVIPDNAAEKPDQGEVLAIGPGKKDDKGNNIALDVKVGDRVLFGKYAGQGVKVDGQELLVMREEDIMAVVNK.

Belongs to the GroES chaperonin family. In terms of assembly, heptamer of 7 subunits arranged in a ring. Interacts with the chaperonin GroEL.

The protein localises to the cytoplasm. Its function is as follows. Together with the chaperonin GroEL, plays an essential role in assisting protein folding. The GroEL-GroES system forms a nano-cage that allows encapsulation of the non-native substrate proteins and provides a physical environment optimized to promote and accelerate protein folding. GroES binds to the apical surface of the GroEL ring, thereby capping the opening of the GroEL channel. The polypeptide is Co-chaperonin GroES (Cupriavidus taiwanensis (strain DSM 17343 / BCRC 17206 / CCUG 44338 / CIP 107171 / LMG 19424 / R1) (Ralstonia taiwanensis (strain LMG 19424))).